The chain runs to 451 residues: MRECISIHIGQAGIQVGNACWELYCLEHGIQADGQMPGDKTIGGGDDAFNTFFSETGAGKHVPRAVFVDLEPTVIDEVRTGTYRQLFHPEQLISGKEDAANNFARGHYTIGKEIVDLCLDRIRKLADNCTGLQGFLVFNAVGGGTGSGLGSLLLERLSVDYGKKSKLGFTVYPSPQVSTSVVEPYNSVLSTHSLLEHTDVAILLDNEAIYDICRRSLDIERPTYTNLNRLVSQVISSLTASLRFDGALNVDVNEFQTNLVPYPRIHFMLSSYAPVISAEKAYHEQLSVAEITNSAFEPSSMMAKCDPRHGKYMACCLMYRGDVVPKDVNAAVATIKTKRTIQFVDWCPTGFKCGINYQPPSVVPGGDLAKVQRAVCMISNSTSVVEVFSRIDHKFDLMYAKRAFVHWYVGEGMEEGEFSEAREDLAALEKDYEEVGAEFDEGEDGDEGDEY.

Residue glutamine 11 participates in GTP binding. N6-acetyllysine is present on lysine 40. Residues glutamate 71, glycine 144, threonine 145, threonine 179, asparagine 206, and asparagine 228 each contribute to the GTP site. Mg(2+) is bound at residue glutamate 71. Residue glutamate 254 is part of the active site.

Belongs to the tubulin family. As to quaternary structure, dimer of alpha and beta chains. A typical microtubule is a hollow water-filled tube with an outer diameter of 25 nm and an inner diameter of 15 nM. Alpha-beta heterodimers associate head-to-tail to form protofilaments running lengthwise along the microtubule wall with the beta-tubulin subunit facing the microtubule plus end conferring a structural polarity. Microtubules usually have 13 protofilaments but different protofilament numbers can be found in some organisms and specialized cells. It depends on Mg(2+) as a cofactor. In terms of processing, undergoes a tyrosination/detyrosination cycle, the cyclic removal and re-addition of a C-terminal tyrosine residue by the enzymes tubulin tyrosine carboxypeptidase (TTCP) and tubulin tyrosine ligase (TTL), respectively. Acetylation of alpha chains at Lys-40 stabilizes microtubules and affects affinity and processivity of microtubule motors. This modification has a role in multiple cellular functions, ranging from cell motility, cell cycle progression or cell differentiation to intracellular trafficking and signaling.

Its subcellular location is the cytoplasm. The protein localises to the cytoskeleton. It carries out the reaction GTP + H2O = GDP + phosphate + H(+). Tubulin is the major constituent of microtubules, a cylinder consisting of laterally associated linear protofilaments composed of alpha- and beta-tubulin heterodimers. Microtubules grow by the addition of GTP-tubulin dimers to the microtubule end, where a stabilizing cap forms. Below the cap, tubulin dimers are in GDP-bound state, owing to GTPase activity of alpha-tubulin. This chain is Tubulin alpha-1 chain (TUBA1), found in Zea mays (Maize).